A 41-amino-acid chain; its full sequence is uncharacterized protein (41 aa).

The helical transmembrane segment at 8–28 (IKKIAMFFLGILVGVFIVLFF) threads the bilayer.

Its subcellular location is the membrane. This is an uncharacterized protein from Streptococcus pneumoniae serotype 2 (strain D39 / NCTC 7466).